The chain runs to 81 residues: Photosystem I iron-sulfur center (81 aa).

4Fe-4S ferredoxin-type domains lie at 2–31 (SHTV…MVPW) and 37–68 (GQIA…VRVY). [4Fe-4S] cluster contacts are provided by Cys11, Cys14, Cys17, Cys21, Cys48, Cys51, Cys54, and Cys58.

As to quaternary structure, the eukaryotic PSI reaction center is composed of at least 11 subunits. The cofactor is [4Fe-4S] cluster.

Its subcellular location is the plastid. The protein localises to the chloroplast thylakoid membrane. The enzyme catalyses reduced [plastocyanin] + hnu + oxidized [2Fe-2S]-[ferredoxin] = oxidized [plastocyanin] + reduced [2Fe-2S]-[ferredoxin]. Its function is as follows. Apoprotein for the two 4Fe-4S centers FA and FB of photosystem I (PSI); essential for photochemical activity. FB is the terminal electron acceptor of PSI, donating electrons to ferredoxin. The C-terminus interacts with PsaA/B/D and helps assemble the protein into the PSI complex. Required for binding of PsaD and PsaE to PSI. PSI is a plastocyanin/cytochrome c6-ferredoxin oxidoreductase, converting photonic excitation into a charge separation, which transfers an electron from the donor P700 chlorophyll pair to the spectroscopically characterized acceptors A0, A1, FX, FA and FB in turn. The polypeptide is Photosystem I iron-sulfur center (Thalassiosira pseudonana (Marine diatom)).